The following is a 487-amino-acid chain: MADPRRRFRNKKRDEACSGLLAPVTIARREDAARMMQPKILLKKDRDREQETWDRERDKDRKLERDREAEPSPSCYPDTPPALKTMIVNRTGEVRPADRCQMPLAGGALVQGSGQLSAVPSSSVCAALVSSVPTSRDKGSCSGGAGTAGTSAGAPNALQELQPPRMNRPTPLIVANGIFNANARKLFHKTNTDFTVIGVLGGQSSGKSTLLNLLAAERSLDYDYYQHLFSPEADECIFATRHKLKPNNGQKSILRPRTETLQFFITRERHILLDTPPLMPVGKDSDHQDLYSLGTMAQLLSVCHILILVIDGLALEQLRLINAALRLRPTLHCKGYVRDHMPQVVFVRARAHRIDFEIQQRERLDKKLAYLYGPTGLPIYRGRGDARCLNTFLLPEVSSNKATAFHSCLGELVRQFRERILGCTRISMCHTSTELSEAIWFEILAESARKAAPHFEKIYAEIKLRHLDTRCQWRSDNWRTFSSNAES.

2 disordered regions span residues 30–83 (EDAA…PPAL) and 136–164 (RDKGSCSGGAGTAGTSAGAPNALQELQPP). Over residues 42-70 (LKKDRDREQETWDRERDKDRKLERDREAE) the composition is skewed to basic and acidic residues.

It belongs to the SMG9 family.

Its function is as follows. Involved in nonsense-mediated decay (NMD) of mRNAs containing premature stop codons. Probable component of kinase complex containing nonC and recruited to stalled ribosomes. This Drosophila melanogaster (Fruit fly) protein is Protein SMG9.